A 177-amino-acid chain; its full sequence is Large ribosomal subunit protein uL6 (177 aa).

The protein belongs to the universal ribosomal protein uL6 family. Part of the 50S ribosomal subunit.

This protein binds to the 23S rRNA, and is important in its secondary structure. It is located near the subunit interface in the base of the L7/L12 stalk, and near the tRNA binding site of the peptidyltransferase center. In Rhizobium rhizogenes (strain K84 / ATCC BAA-868) (Agrobacterium radiobacter), this protein is Large ribosomal subunit protein uL6.